The following is a 333-amino-acid chain: Photosystem II assembly lipoprotein Ycf48 (333 aa).

Residues 1–23 (MKRLLNSATQLLLVLVLGISLSG) form the signal peptide. The N-palmitoyl cysteine moiety is linked to residue C24. C24 carries S-diacylglycerol cysteine lipidation.

This sequence belongs to the Ycf48 family. Part of early PSII assembly complexes which includes D1 (psbA) and PsbI; not found in mature PSII. Binds to the lumenal side of PSII complexes. Interacts with YidC.

It is found in the cellular thylakoid membrane. In terms of biological role, a factor required for optimal assembly of photosystem II (PSII), acting in the early stages of PSII assembly. Also plays a role in replacement of photodamaged D1 (psbA). Assists YidC in synthesis of chlorophyll-binding proteins. This chain is Photosystem II assembly lipoprotein Ycf48, found in Synechococcus sp. (strain CC9605).